The following is a 214-amino-acid chain: Small ribosomal subunit protein uS3c (214 aa).

One can recognise a KH type-2 domain in the interval 39–111; the sequence is IRTYIHTISK…QLTINVLEVE (73 aa).

The protein belongs to the universal ribosomal protein uS3 family. Part of the 30S ribosomal subunit.

It is found in the plastid. The protein localises to the chloroplast. The chain is Small ribosomal subunit protein uS3c (rps3) from Phaeodactylum tricornutum (strain CCAP 1055/1).